The chain runs to 571 residues: S100P-binding protein (571 aa).

Over residues 270-280 (SDIPFDGDIDE) the composition is skewed to acidic residues. Disordered regions lie at residues 270–312 (SDIP…LESV) and 356–385 (NGQN…CSQS). Residues 299–309 (TSESTPASSEL) show a composition bias toward polar residues. A compositionally biased stretch (pro residues) spans 365 to 378 (PLPPSDTAPGPQLP).

The protein localises to the nucleus. The sequence is that of S100P-binding protein (s100pbp) from Xenopus tropicalis (Western clawed frog).